Reading from the N-terminus, the 677-residue chain is MLTSPRLILLLLAWVFSALVASALVKKDWTITWEPGAPNGQERNMIKINNQFPGPTILCDEDDDIEVTVHNKMPFNTTVHWHGLERVNCVRMMGTPWSDGTPGMSQKPIEMGQSFIYRFKASPAGTHWYHSHSRATVLDGLYGPIFIRRKPDAPAPWHLISKEQADIDAMSRAVIDPKLVMVSDWTRFMSWEYMAAEESSGMAIFCSDSILVNGKGSLYCPDVDVLINHTSTYMKYGLYPRQVNDKGCFPFMRSTQGPYLTTGKPETIPLHLQHGCTPAEGTNETIEVDPADQWASLNFIGGATFKTIVFSVDEHDMWVYEVDGHYIVPQRVNTVHMYAGERYAVMIKLDKTPKDYTIRVADSGLTQVISAFATLRYKGGIQGSDSVGVIDYGGQNSTKDGSVITLDREHLPPYPPNPPARKADAMHVLSTHRWKSAWQYTMSGHGMYEEDRSAYGPLLYDPHSADAMDEGLVIRTKNGSWVDLVLQVGSLPGQPQEFPHMMHKHTGKTWQIGSGMGIWNYSSVEEAIAAEPHNFDLDTPKWRDTFVTSFDGSAWIVLRYQVTNPGPWLFHCHIETHLAGGMAIAILDGIDVWPQIPAEYGPDQRGFMPGTLPELESGGKQGTVDKQCPLLAVSPSGGPKKDSGETSASDSRWETLIRGLIQVLQGWLSDEASSRSS.

A signal peptide spans 1–23 (MLTSPRLILLLLAWVFSALVASA). 2 consecutive Plastocyanin-like domains span residues 31–150 (ITWE…IRRK) and 179–379 (LVMV…RYKG). A glycan (N-linked (GlcNAc...) asparagine) is linked at Asn76. Cu cation-binding residues include His80, His82, His130, and His132. Asn228, Asn283, Asn396, and Asn478 each carry an N-linked (GlcNAc...) asparagine glycan. A Plastocyanin-like 3 domain is found at 469–588 (DEGLVIRTKN…AGGMAIAILD (120 aa)). His503 serves as a coordination point for Cu cation. Asn520 carries an N-linked (GlcNAc...) asparagine glycan. The segment at 629-651 (PLLAVSPSGGPKKDSGETSASDS) is disordered.

This sequence belongs to the multicopper oxidase family. As to quaternary structure, might be part of an extracellular enzyme complex composed of GIP1, aurF, aurO and aurS.

Its subcellular location is the secreted. It localises to the extracellular space. It functions in the pathway pigment biosynthesis. Functionally, multicopper oxidase; part of the gene cluster that mediates the biosynthesis of aurofusarin, a red mycelium pigment which is acting as a mycotoxin. The first step is performed by the polyketide synthase which condenses one acetyl-CoA and 6 malonyl-CoA units to form the first intermediate, the cyclic heptaketide and yellow pigment YWA1. The C2 hydroxyl group in the pyrone ring of YWA1 is probably formed during ring closure by an aldol-type cyclization reaction. The dehydratase aurZ then acts as the first tailoring enzyme in the aurofusarin biosynthetic pathway by converting YWA1 to nor-rubrofusarin. Nor-rubrofusarin is then methylated to rubrofusarin by the O-methyltransferase aurJ. Rubrofusarin is then transported across the plasma membrane by the rubrofusarin-specific pump aurT for further enzymatic processing by the extracellular complex composed of GIP1, aurF, aurO and aurS to yield aurofusarin. This Gibberella zeae (strain ATCC MYA-4620 / CBS 123657 / FGSC 9075 / NRRL 31084 / PH-1) (Wheat head blight fungus) protein is Multicopper oxidase GIP1.